Consider the following 719-residue polypeptide: Solute carrier organic anion transporter family member 6A1 (719 aa).

Residues 1–46 (MFVGVARHSGSQDEVSRGVEPLEAARAQPAKDRRAKGTPKSSKPGK) form a disordered region. The Cytoplasmic segment spans residues 1–106 (MFVGVARHSG…TCCECCNNIR (106 aa)). Over residues 33–46 (RRAKGTPKSSKPGK) the composition is skewed to basic residues. The chain crosses the membrane as a helical span at residues 107 to 126 (CFMIFYCILLICQGVVFGLI). At 127–145 (DVSIGDFQKEYQLKTIEKL) the chain is on the extracellular side. A helical transmembrane segment spans residues 146–166 (ALEKSYDISSGLVAIFIAFYG). At 167 to 171 (DRKKV) the chain is on the cytoplasmic side. The helical transmembrane segment at 172–196 (IWFVASSFLIGLGSLLCAFPSINEE) threads the bilayer. The Extracellular portion of the chain corresponds to 197 to 223 (NKQSKVGIEDICEEIKVVSGCQSSGIS). The chain crosses the membrane as a helical span at residues 224–254 (FQSKYLSFFILGQTVQGIAGMPLYILGITFI). The Cytoplasmic segment spans residues 255 to 274 (DENVATHSAGIYLGIAECTS). Residues 275–295 (MIGYALGYVLGAPLVKVPENT) form a helical membrane-spanning segment. Residues 296 to 311 (TSATNTTVNNGSPEWL) lie on the Extracellular side of the membrane. Asn300 carries an N-linked (GlcNAc...) asparagine glycan. The chain crosses the membrane as a helical span at residues 312 to 336 (WTWWINFLFAAVVAWCTLIPLSCFP). Residues 337–378 (NNMPGSTRIKARKRKQLHFFDSRLKDLKLGTNIKDLCAALWI) lie on the Cytoplasmic side of the membrane. The helical transmembrane segment at 379–400 (LMKNPVLICLALSKATEYLVII) threads the bilayer. Topologically, residues 401–420 (GASEFLPIYLENQFILTPTV) are extracellular. The chain crosses the membrane as a helical span at residues 421–444 (ATTLAGLVLIPGGALGQLLGGVIV). Residues 445-448 (STLE) are Cytoplasmic-facing. Residues 449–472 (MSCKALMRFIMVTSVISLILLVFI) traverse the membrane as a helical segment. The Extracellular portion of the chain corresponds to 473 to 581 (IFVRCNPVQF…DAKCYKLPLF (109 aa)). In terms of domain architecture, Kazal-like spans 496-551 (GNLTAPCNEKCRCSSSIYSSICGRDDIEYFSPCFAGCTYSKAQNQKKMYYNCSCIK). Asn497 carries N-linked (GlcNAc...) asparagine glycosylation. Disulfide bonds link Cys502–Cys532, Cys508–Cys528, and Cys517–Cys549. Asn546 is a glycosylation site (N-linked (GlcNAc...) asparagine). A helical transmembrane segment spans residues 582–604 (IAFIFSTLIFSGFSGVPIVLAMT). Residues 605–613 (RVVPDKLRS) are Cytoplasmic-facing. Residues 614–639 (LALGVSYVILRIFGTIPGPSIFKMSG) form a helical membrane-spanning segment. The Extracellular segment spans residues 640 to 673 (ETSCILRDVNKCGHTGRCWIYNKTKMAFLLVGIC). Residue Asn661 is glycosylated (N-linked (GlcNAc...) asparagine). A helical transmembrane segment spans residues 674 to 691 (FLCKLCTIIFTTIAFFIY). At 692-719 (KRRLNENTDFPDVTVKNPKVKKKEETDL) the chain is on the cytoplasmic side.

It belongs to the organo anion transporter (TC 2.A.60) family. Strongly expressed in testis. Weakly expressed in spleen, brain, fetal brain and placenta. Detected in lung tumors.

Its subcellular location is the cell membrane. This Homo sapiens (Human) protein is Solute carrier organic anion transporter family member 6A1 (SLCO6A1).